The primary structure comprises 384 residues: S-adenosylmethionine synthase (384 aa).

Position 15 (histidine 15) interacts with ATP. Aspartate 17 contacts Mg(2+). Glutamate 43 serves as a coordination point for K(+). L-methionine is bound by residues glutamate 56 and glutamine 99. Residues glutamine 99–arginine 109 are flexible loop. ATP-binding positions include aspartate 164 to lysine 166, arginine 231 to phenylalanine 232, aspartate 240, arginine 246 to lysine 247, alanine 263, and lysine 267. Aspartate 240 is a binding site for L-methionine. Residue lysine 271 participates in L-methionine binding.

The protein belongs to the AdoMet synthase family. As to quaternary structure, homotetramer; dimer of dimers. It depends on Mg(2+) as a cofactor. K(+) serves as cofactor.

The protein localises to the cytoplasm. It catalyses the reaction L-methionine + ATP + H2O = S-adenosyl-L-methionine + phosphate + diphosphate. It participates in amino-acid biosynthesis; S-adenosyl-L-methionine biosynthesis; S-adenosyl-L-methionine from L-methionine: step 1/1. Functionally, catalyzes the formation of S-adenosylmethionine (AdoMet) from methionine and ATP. The overall synthetic reaction is composed of two sequential steps, AdoMet formation and the subsequent tripolyphosphate hydrolysis which occurs prior to release of AdoMet from the enzyme. The sequence is that of S-adenosylmethionine synthase from Shewanella pealeana (strain ATCC 700345 / ANG-SQ1).